The sequence spans 368 residues: Phosphate acyltransferase (368 aa).

Residues 334-368 form a disordered region; sequence EGSLEQAARDASGAGHASPIAGQPAEPYAAQSSKA.

Belongs to the PlsX family. As to quaternary structure, homodimer. Probably interacts with PlsY.

The protein localises to the cytoplasm. It catalyses the reaction a fatty acyl-[ACP] + phosphate = an acyl phosphate + holo-[ACP]. It functions in the pathway lipid metabolism; phospholipid metabolism. In terms of biological role, catalyzes the reversible formation of acyl-phosphate (acyl-PO(4)) from acyl-[acyl-carrier-protein] (acyl-ACP). This enzyme utilizes acyl-ACP as fatty acyl donor, but not acyl-CoA. The polypeptide is Phosphate acyltransferase (Paraburkholderia xenovorans (strain LB400)).